The primary structure comprises 143 residues: Large ribosomal subunit protein uL11 (143 aa).

This sequence belongs to the universal ribosomal protein uL11 family. Part of the ribosomal stalk of the 50S ribosomal subunit. Interacts with L10 and the large rRNA to form the base of the stalk. L10 forms an elongated spine to which L12 dimers bind in a sequential fashion forming a multimeric L10(L12)X complex. One or more lysine residues are methylated.

In terms of biological role, forms part of the ribosomal stalk which helps the ribosome interact with GTP-bound translation factors. This Albidiferax ferrireducens (strain ATCC BAA-621 / DSM 15236 / T118) (Rhodoferax ferrireducens) protein is Large ribosomal subunit protein uL11.